Here is a 66-residue protein sequence, read N- to C-terminus: Small ribosomal subunit protein bS21 (66 aa).

This sequence belongs to the bacterial ribosomal protein bS21 family.

The chain is Small ribosomal subunit protein bS21 from Rickettsia felis (strain ATCC VR-1525 / URRWXCal2) (Rickettsia azadi).